A 231-amino-acid chain; its full sequence is 7-cyano-7-deazaguanine synthase (231 aa).

11 to 21 (LSGGLDSATTM) contributes to the ATP binding site. 4 residues coordinate Zn(2+): cysteine 195, cysteine 205, cysteine 208, and cysteine 211.

Belongs to the QueC family. It depends on Zn(2+) as a cofactor.

It carries out the reaction 7-carboxy-7-deazaguanine + NH4(+) + ATP = 7-cyano-7-deazaguanine + ADP + phosphate + H2O + H(+). Its pathway is purine metabolism; 7-cyano-7-deazaguanine biosynthesis. Functionally, catalyzes the ATP-dependent conversion of 7-carboxy-7-deazaguanine (CDG) to 7-cyano-7-deazaguanine (preQ(0)). The polypeptide is 7-cyano-7-deazaguanine synthase (Syntrophus aciditrophicus (strain SB)).